A 464-amino-acid polypeptide reads, in one-letter code: Argininosuccinate lyase (464 aa).

The protein belongs to the lyase 1 family. Argininosuccinate lyase subfamily.

The protein resides in the cytoplasm. It carries out the reaction 2-(N(omega)-L-arginino)succinate = fumarate + L-arginine. It participates in amino-acid biosynthesis; L-arginine biosynthesis; L-arginine from L-ornithine and carbamoyl phosphate: step 3/3. Its activity is regulated as follows. Strongly inhibited by L-arginine. Inhibitory effects are lowered at pH 7.0 compared to those at pH 8.0. At 37 degrees Celsius and pH 7.5, activity decreases to 73% and 31% in the presence of 1 mM and 10 mM arginine, respectively. Activity also decreases to 84%, 93%, 82% and 85% in the presence of 10 mM sodium citrate, citrulline, asparatate and glutamate, respectively. Activity decreases to 96% in presence of 1 mM L-lysine. Functionally, catalyzes the last step of arginine biosynthesis, the conversion of argininosuccinate into L-arginine and fumarate. In Arthrospira platensis (strain NIES-39 / UTEX 3086 / IAM M-135) (Spirulina platensis), this protein is Argininosuccinate lyase.